Consider the following 159-residue polypeptide: MKVKLITVGKLKEKYLKDGIAEYIKRLGRFTKFESIELTDEKTPDNASEAENKAILDKEGQRILAKVGDRDYVIALAIEGKQFPSEQFAKELEQATLRGYSDITFIIGGSLGLSPKVKKRANQLMSFGLLTFPHQLMRLILVEQIYRAFMIQQGSPYHK.

Residues Leu-76, Gly-108, and 127–132 each bind S-adenosyl-L-methionine; that span reads FGLLTF.

It belongs to the RNA methyltransferase RlmH family. As to quaternary structure, homodimer.

The protein localises to the cytoplasm. The catalysed reaction is pseudouridine(1915) in 23S rRNA + S-adenosyl-L-methionine = N(3)-methylpseudouridine(1915) in 23S rRNA + S-adenosyl-L-homocysteine + H(+). Specifically methylates the pseudouridine at position 1915 (m3Psi1915) in 23S rRNA. This chain is Ribosomal RNA large subunit methyltransferase H, found in Streptococcus thermophilus (strain CNRZ 1066).